The following is a 413-amino-acid chain: Multifunctional CCA protein (413 aa).

Residues Gly8 and Arg11 each coordinate ATP. 2 residues coordinate CTP: Gly8 and Arg11. Mg(2+) contacts are provided by Asp21 and Asp23. Arg91, Arg143, and Arg146 together coordinate ATP. Arg91, Arg143, and Arg146 together coordinate CTP. The region spanning 232-333 (TGVHVMMVVD…VRLFERSDAL (102 aa)) is the HD domain.

Belongs to the tRNA nucleotidyltransferase/poly(A) polymerase family. Bacterial CCA-adding enzyme type 1 subfamily. Monomer. Can also form homodimers and oligomers. Mg(2+) serves as cofactor. Ni(2+) is required as a cofactor.

The catalysed reaction is a tRNA precursor + 2 CTP + ATP = a tRNA with a 3' CCA end + 3 diphosphate. It carries out the reaction a tRNA with a 3' CCA end + 2 CTP + ATP = a tRNA with a 3' CCACCA end + 3 diphosphate. Its function is as follows. Catalyzes the addition and repair of the essential 3'-terminal CCA sequence in tRNAs without using a nucleic acid template. Adds these three nucleotides in the order of C, C, and A to the tRNA nucleotide-73, using CTP and ATP as substrates and producing inorganic pyrophosphate. tRNA 3'-terminal CCA addition is required both for tRNA processing and repair. Also involved in tRNA surveillance by mediating tandem CCA addition to generate a CCACCA at the 3' terminus of unstable tRNAs. While stable tRNAs receive only 3'-terminal CCA, unstable tRNAs are marked with CCACCA and rapidly degraded. The chain is Multifunctional CCA protein from Burkholderia cenocepacia (strain HI2424).